The chain runs to 396 residues: Phosphoglycerate kinase (396 aa).

Residues 21–23, Arg-37, 60–63, Arg-121, and Arg-154 contribute to the substrate site; these read DFN and HLGR. ATP-binding positions include Lys-205, Gly-296, Glu-327, and 353-356; that span reads GGDS.

This sequence belongs to the phosphoglycerate kinase family. In terms of assembly, monomer.

The protein resides in the cytoplasm. The enzyme catalyses (2R)-3-phosphoglycerate + ATP = (2R)-3-phospho-glyceroyl phosphate + ADP. The protein operates within carbohydrate degradation; glycolysis; pyruvate from D-glyceraldehyde 3-phosphate: step 2/5. This chain is Phosphoglycerate kinase, found in Anaeromyxobacter sp. (strain Fw109-5).